Reading from the N-terminus, the 92-residue chain is MARKCEITGKKTMFGNNVPRKGLAKKKGGARQHIGVKTKRTFKVNLINKKFFIPDLGRSINIKVSANALRSISKIGLDAFLKKNCKKIENFL.

It belongs to the bacterial ribosomal protein bL28 family.

The sequence is that of Large ribosomal subunit protein bL28 from Borreliella afzelii (strain PKo) (Borrelia afzelii).